Consider the following 256-residue polypeptide: Pimeloyl-[acyl-carrier protein] methyl ester esterase (256 aa).

Residues 15 to 242 enclose the AB hydrolase-1 domain; it reads HLVLLHGWGL…AAHAPFISHP (228 aa). Substrate is bound by residues tryptophan 22, 82–83, and 143–147; these read SL and FLALQ. Serine 82 acts as the Nucleophile in catalysis. Catalysis depends on residues aspartate 207 and histidine 235. Substrate is bound at residue histidine 235.

The protein belongs to the AB hydrolase superfamily. Carboxylesterase BioH family. In terms of assembly, monomer.

It localises to the cytoplasm. The enzyme catalyses 6-carboxyhexanoyl-[ACP] methyl ester + H2O = 6-carboxyhexanoyl-[ACP] + methanol + H(+). It participates in cofactor biosynthesis; biotin biosynthesis. Functionally, the physiological role of BioH is to remove the methyl group introduced by BioC when the pimeloyl moiety is complete. It allows to synthesize pimeloyl-ACP via the fatty acid synthetic pathway through the hydrolysis of the ester bonds of pimeloyl-ACP esters. This Escherichia coli O139:H28 (strain E24377A / ETEC) protein is Pimeloyl-[acyl-carrier protein] methyl ester esterase.